The primary structure comprises 333 residues: 4-hydroxy-3-methylbut-2-enyl diphosphate reductase (333 aa).

Residue Cys-33 participates in [4Fe-4S] cluster binding. 2 residues coordinate (2E)-4-hydroxy-3-methylbut-2-enyl diphosphate: His-62 and His-95. Positions 62 and 95 each coordinate dimethylallyl diphosphate. Isopentenyl diphosphate is bound by residues His-62 and His-95. Cys-117 provides a ligand contact to [4Fe-4S] cluster. His-145 contacts (2E)-4-hydroxy-3-methylbut-2-enyl diphosphate. His-145 contributes to the dimethylallyl diphosphate binding site. Residue His-145 coordinates isopentenyl diphosphate. Glu-147 acts as the Proton donor in catalysis. Thr-186 lines the (2E)-4-hydroxy-3-methylbut-2-enyl diphosphate pocket. Cys-216 provides a ligand contact to [4Fe-4S] cluster. Residues Ser-244, Ser-245, Asn-246, and Ser-289 each coordinate (2E)-4-hydroxy-3-methylbut-2-enyl diphosphate. 4 residues coordinate dimethylallyl diphosphate: Ser-244, Ser-245, Asn-246, and Ser-289. 4 residues coordinate isopentenyl diphosphate: Ser-244, Ser-245, Asn-246, and Ser-289.

It belongs to the IspH family. Requires [4Fe-4S] cluster as cofactor.

It carries out the reaction isopentenyl diphosphate + 2 oxidized [2Fe-2S]-[ferredoxin] + H2O = (2E)-4-hydroxy-3-methylbut-2-enyl diphosphate + 2 reduced [2Fe-2S]-[ferredoxin] + 2 H(+). The enzyme catalyses dimethylallyl diphosphate + 2 oxidized [2Fe-2S]-[ferredoxin] + H2O = (2E)-4-hydroxy-3-methylbut-2-enyl diphosphate + 2 reduced [2Fe-2S]-[ferredoxin] + 2 H(+). The protein operates within isoprenoid biosynthesis; dimethylallyl diphosphate biosynthesis; dimethylallyl diphosphate from (2E)-4-hydroxy-3-methylbutenyl diphosphate: step 1/1. It participates in isoprenoid biosynthesis; isopentenyl diphosphate biosynthesis via DXP pathway; isopentenyl diphosphate from 1-deoxy-D-xylulose 5-phosphate: step 6/6. Functionally, catalyzes the conversion of 1-hydroxy-2-methyl-2-(E)-butenyl 4-diphosphate (HMBPP) into a mixture of isopentenyl diphosphate (IPP) and dimethylallyl diphosphate (DMAPP). Acts in the terminal step of the DOXP/MEP pathway for isoprenoid precursor biosynthesis. The sequence is that of 4-hydroxy-3-methylbut-2-enyl diphosphate reductase from Corynebacterium diphtheriae (strain ATCC 700971 / NCTC 13129 / Biotype gravis).